The sequence spans 412 residues: Double C2-like domain-containing protein beta (412 aa).

The negatively regulates targeting to plasma membrane stretch occupies residues Met-1–Tyr-36. The interval Met-1–Tyr-90 is mediates interaction with DYNLT1. Residues Pro-38–Asp-123 form a disordered region. Residues Gly-49–Arg-70 show a composition bias toward low complexity. Pro residues predominate over residues Gly-95–Lys-108. A compositionally biased stretch (acidic residues) spans Asp-112–Asp-123. 2 C2 domains span residues Ala-126–Leu-250 and Glu-266–His-399. Residues Asp-157, Asp-163, Asp-218, Asp-220, Asp-297, Asp-303, Asp-357, Asp-359, and Asp-365 each coordinate Ca(2+). The interval Asp-257 to His-375 is mediates interaction with STXBP3. The residue at position 411 (Ser-411) is a Phosphoserine.

In terms of assembly, interacts with the SNARE (soluble N-ethylmaleimide-sensitive factor attached protein receptor) complex composed of SNAP25, STX1A and VAMP2; the interaction is calcium-dependent and competitive with SYT1. Interacts with STX4; the interaction is calcium-dependent, increased by insulin and glucose, and mediates vesicle fusion with plasma membrane in pancreatic cells and adipocytes. Interacts with STXBP3; the interaction is direct, occurs at the cell membrane and regulates glucose-stimulated insulin secretion. May interact with UNC13A; the interaction mediates targeting to the plasma membrane. Interacts with cytoplasmic dynein light chain DYNLT1. It depends on Ca(2+) as a cofactor. Widely expressed with highest levels in brain and kidney. Expressed in pancreatic islet cells (at protein level).

It is found in the cytoplasm. The protein resides in the cytoplasmic granule. Its subcellular location is the cell membrane. Functionally, calcium sensor which positively regulates SNARE-dependent fusion of vesicles with membranes. Binds phospholipids in a calcium-dependent manner and may act at the priming stage of fusion by modifying membrane curvature to stimulate fusion. Involved in calcium-triggered exocytosis in chromaffin cells and calcium-dependent spontaneous release of neurotransmitter in absence of action potentials in neuronal cells. Involved both in glucose-stimulated insulin secretion in pancreatic cells and insulin-dependent GLUT4 transport to the plasma membrane in adipocytes. The protein is Double C2-like domain-containing protein beta of Homo sapiens (Human).